Reading from the N-terminus, the 518-residue chain is Trigger factor (518 aa).

Residues 170–255 (GDVVVIDFVG…VKGLESPQEA (86 aa)) form the PPIase FKBP-type domain. The disordered stretch occupies residues 447–518 (EAPAKPAKKA…AKKAAAKKDA (72 aa)). 2 stretches are compositionally biased toward basic residues: residues 452–468 (PAKK…KKAA) and 501–518 (PAAK…KKDA).

Belongs to the FKBP-type PPIase family. Tig subfamily.

The protein resides in the cytoplasm. The enzyme catalyses [protein]-peptidylproline (omega=180) = [protein]-peptidylproline (omega=0). Functionally, involved in protein export. Acts as a chaperone by maintaining the newly synthesized protein in an open conformation. Functions as a peptidyl-prolyl cis-trans isomerase. This is Trigger factor from Maricaulis maris (strain MCS10) (Caulobacter maris).